The primary structure comprises 167 residues: MRCGPLYQFLWLWPYLSYVEAVPIRKVQDDTKTLIKTIVTRINDISHTQSVSSKQRVTGLDFIPGLHPLLSLSKMDQTLAIYQQILTSLPSRNVVQISNDLENLRDLLHLLAASKSCPLPQVRALESLESLGVVLEASLYSTEVVALSRLQGSLQDMLRQLDLSPGC.

A signal peptide spans M1–A21. A disulfide bond links C117 and C167.

Belongs to the leptin family.

The protein resides in the secreted. In terms of biological role, key player in the regulation of energy balance and body weight control. Once released into the circulation, has central and peripheral effects by binding LEPR, found in many tissues, which results in the activation of several major signaling pathways. In the hypothalamus, acts as an appetite-regulating factor that induces a decrease in food intake and an increase in energy consumption by inducing anorexinogenic factors and suppressing orexigenic neuropeptides, also regulates bone mass and secretion of hypothalamo-pituitary-adrenal hormones. In the periphery, increases basal metabolism, influences reproductive function, regulates pancreatic beta-cell function and insulin secretion, is pro-angiogenic for endothelial cell and affects innate and adaptive immunity. In the arcuate nucleus of the hypothalamus, activates by depolarization POMC neurons inducing FOS and SOCS3 expression to release anorexigenic peptides and inhibits by hyperpolarization NPY neurons inducing SOCS3 with a consequent reduction on release of orexigenic peptides. In addition to its known satiety inducing effect, has a modulatory role in nutrient absorption. In the intestine, reduces glucose absorption by enterocytes by activating PKC and leading to a sequential activation of p38, PI3K and ERK signaling pathways which exerts an inhibitory effect on glucose absorption. Acts as a growth factor on certain tissues, through the activation of different signaling pathways increases expression of genes involved in cell cycle regulation such as CCND1, via JAK2-STAT3 pathway, or VEGFA, via MAPK1/3 and PI3K-AKT1 pathways. May also play an apoptotic role via JAK2-STAT3 pathway and up-regulation of BIRC5 expression. Pro-angiogenic, has mitogenic activity on vascular endothelial cells and plays a role in matrix remodeling by regulating the expression of matrix metalloproteinases (MMPs) and tissue inhibitors of metalloproteinases (TIMPs). In innate immunity, modulates the activity and function of neutrophils by increasing chemotaxis and the secretion of oxygen radicals. Increases phagocytosis by macrophages and enhances secretion of pro-inflammatory mediators. Increases cytotoxic ability of NK cells. Plays a pro-inflammatory role, in synergy with IL1B, by inducing NOS2 which promotes the production of IL6, IL8 and Prostaglandin E2, through a signaling pathway that involves JAK2, PI3K, MAP2K1/MEK1 and MAPK14/p38. In adaptive immunity, promotes the switch of memory T-cells towards T helper-1 cell immune responses. Increases CD4(+)CD25(-) T-cell proliferation and reduces autophagy during TCR (T-cell receptor) stimulation, through MTOR signaling pathway activation and BCL2 up-regulation. The protein is Leptin (LEP) of Bubalus bubalis (Domestic water buffalo).